Reading from the N-terminus, the 179-residue chain is NADH dehydrogenase [ubiquinone] 1 beta subcomplex subunit 9 (179 aa).

Position 2 is an N-acetylalanine (Ala2). Ser85 is subject to Phosphoserine. The interval Glu136–Asp162 is disordered.

The protein belongs to the complex I LYR family. Mammalian complex I is composed of 45 different subunits.

The protein localises to the mitochondrion inner membrane. Functionally, accessory subunit of the mitochondrial membrane respiratory chain NADH dehydrogenase (Complex I), that is believed to be not involved in catalysis. Complex I functions in the transfer of electrons from NADH to the respiratory chain. The immediate electron acceptor for the enzyme is believed to be ubiquinone. This is NADH dehydrogenase [ubiquinone] 1 beta subcomplex subunit 9 (NDUFB9) from Pan troglodytes (Chimpanzee).